The following is a 144-amino-acid chain: Prefoldin subunit alpha (144 aa).

Belongs to the prefoldin alpha subunit family. In terms of assembly, heterohexamer of two alpha and four beta subunits.

It is found in the cytoplasm. Molecular chaperone capable of stabilizing a range of proteins. Seems to fulfill an ATP-independent, HSP70-like function in archaeal de novo protein folding. The chain is Prefoldin subunit alpha from Methanococcus aeolicus (strain ATCC BAA-1280 / DSM 17508 / OCM 812 / Nankai-3).